We begin with the raw amino-acid sequence, 430 residues long: Enolase (430 aa).

Gln163 serves as a coordination point for (2R)-2-phosphoglycerate. Glu205 functions as the Proton donor in the catalytic mechanism. Mg(2+) is bound by residues Asp242, Glu288, and Asp315. Lys340, Arg369, Ser370, and Lys391 together coordinate (2R)-2-phosphoglycerate. The Proton acceptor role is filled by Lys340.

The protein belongs to the enolase family. Mg(2+) is required as a cofactor.

It is found in the cytoplasm. The protein localises to the secreted. The protein resides in the cell surface. The catalysed reaction is (2R)-2-phosphoglycerate = phosphoenolpyruvate + H2O. The protein operates within carbohydrate degradation; glycolysis; pyruvate from D-glyceraldehyde 3-phosphate: step 4/5. Functionally, catalyzes the reversible conversion of 2-phosphoglycerate (2-PG) into phosphoenolpyruvate (PEP). It is essential for the degradation of carbohydrates via glycolysis. The polypeptide is Enolase (Phytoplasma australiense).